The following is a 280-amino-acid chain: Aquaporin PIP2-7 (280 aa).

At Met1 the chain carries N-acetylmethionine. Residues 1–38 (MSKEVSEEGKTHHGKDYVDPPPAPLLDMGELKSWSFYR) lie on the Cytoplasmic side of the membrane. Lys3 is subject to N6,N6-dimethyllysine. The helical transmembrane segment at 39-59 (ALIAEFIATLLFLYVTVATVI) threads the bilayer. Topologically, residues 60-69 (GHKKQTGPCD) are extracellular. The chain crosses the membrane as a helical span at residues 70–90 (GVGLLGIAWAFGGMIFVLVYC). The Cytoplasmic segment spans residues 91–118 (TAGISGGHINPAVTFGLFLARKVSLVRA). The NPA 1 motif lies at 100–102 (NPA). Residues 119–139 (LGYMIAQCLGAICGVGFVKAF) traverse the membrane as a helical segment. At 140–160 (MKTPYNTLGGGANTVADGYSK) the chain is on the extracellular side. Residues 161-181 (GTALGAEIIGTFVLVYTVFSA) traverse the membrane as a helical segment. Over 182-192 (TDPKRSARDSH) the chain is Cytoplasmic. A helical membrane pass occupies residues 193–213 (IPVLAPLPIGFAVFMVHLATI). Topologically, residues 214 to 242 (PITGTGINPARSFGAAVIYNNEKAWDDQW) are extracellular. The NPA 2 signature appears at 221–223 (NPA). The helical transmembrane segment at 243 to 263 (IFWVGPFLGALAAAAYHQYIL) threads the bilayer. The Cytoplasmic segment spans residues 264 to 280 (RASAIKALGSFRSNATN). Phosphoserine is present on residues Ser273 and Ser276. Thr279 bears the Phosphothreonine mark.

Belongs to the MIP/aquaporin (TC 1.A.8) family. PIP (TC 1.A.8.11) subfamily. Interacts with SYP61 and SYP121 in trafficking vesicles and at the plasma membrane. Highly expressed in flowers, expressed at low levels in siliques, and at low level in leaves and roots. Highly levels in elongating cells in both roots and shoots.

It localises to the cell membrane. In terms of biological role, water channel required to facilitate the transport of water across cell membrane. May be involved in the osmoregulation in plants under high osmotic stress such as under a high salt condition. The polypeptide is Aquaporin PIP2-7 (Arabidopsis thaliana (Mouse-ear cress)).